The following is a 941-amino-acid chain: MADTSHLERMGRELKCPICLSLYNSAVSLSCNHVFCNACIVKSMKMDATCPVCKIPYHRREIRGAPHMDSLVSIYKNMEDASGIKLFVSQNNPSPSDKEKQVRDASVEKASDKNRQGSRKGRASKRNEYGKTKEIDVDAPGPIVMKPSSQTKKRVQLLQNLSAESLTKPTESVETAEKPKDYTENTVIRLDEHPSLNKEGNLSPFFWLRDEDDGENSSQRTESDQLLGTTPVNVPSFSDLMDSDHESPSKEDEQQKPNPGDMFDSEMFEWTQRPCSPEILPSPVKAKVLGRDEIDLTQKKLPKVKVASSKCKNRKAGSARNTVARRSIGVSQEDNMESSAAATISEQQDSRGTSGTIIRNDVNTDENVKAKRATRSKAQSTRVQSDLNVSNEADGKQGTKRKRSSIKSSPAHPIAGPNELSLGTEIVGKGDQDQAHGPSDTHPEKRSPTEKPSLKKRGRKSNASSSLKDLSGKTQKKTSEKKLKLDSHMISSKATQPHGNGILTAGLNQGGDKQDSRNNRKSTVGKDDHTMQVIEKCSTINKSSSGGSAHLRRCNGSLTKKFTCAFCQCSEDTEASGEMTHYYRGEPVSADFNGGSKVIHVHKNCAEWAPNVYFNDLTIVNLDVELTRSRRISCSCCGLKGAALGCYNKSCKNSFHVTCAKLIPECRWDNVKFVMLCPLDASIKLPCEEANSKDRKCKRTPKEPLHSQPKQVSGKANIRELHIKQFHGFSKKLVLSCSGLTVEEKTVIAEFAELSGVTISKNWDSTVTHVIASINENGACKRTLKFMMAILEGKWILTIDWIKACMKNTKYVSEEPYEITMDVHGIREGPYLGRQRALKKKPKLFTGLKFYIMGDFELAYKGYLQDLIVAAGGTILRRRPVSSDDNEASTIVVFSVEPSKKKTLTQRRSDAEALAKSARARAASSSWVLDSIAGCQILVLI.

The RING-type zinc finger occupies 16–54; that stretch reads CPICLSLYNSAVSLSCNHVFCNACIVKSMKMDATCPVCK. Disordered stretches follow at residues 87-282 and 303-528; these read FVSQ…ILPS and KVKV…GKDD. 2 stretches are compositionally biased toward basic and acidic residues: residues 96-115 and 125-136; these read SDKE…DKNR and KRNEYGKTKEID. Positions 157 to 173 are enriched in polar residues; it reads LLQNLSAESLTKPTESV. A compositionally biased stretch (basic and acidic residues) spans 175–196; sequence TAEKPKDYTENTVIRLDEHPSL. The segment covering 216 to 236 has biased composition (polar residues); sequence NSSQRTESDQLLGTTPVNVPS. A compositionally biased stretch (basic and acidic residues) spans 242 to 255; the sequence is DSDHESPSKEDEQQ. The Nuclear localization signal 1 motif lies at 298 to 305; that stretch reads QKKLPKVK. 2 stretches are compositionally biased toward polar residues: residues 329–357 and 376–391; these read GVSQ…SGTI and SKAQ…NVSN. 2 stretches are compositionally biased toward basic and acidic residues: residues 428–453 and 477–487; these read GKGD…EKPS and KTSEKKLKLDS. The short motif at 444–451 is the Nuclear localization signal 2 element; it reads EKRSPTEK. The span at 489–498 shows a compositional bias: polar residues; the sequence is MISSKATQPH. Residues 512 to 528 show a composition bias toward basic and acidic residues; the sequence is DKQDSRNNRKSTVGKDD. The C2HC pre-PHD-type zinc-finger motif lies at 561 to 612; the sequence is KFTCAFCQCSEDTEASGEMTHYYRGEPVSADFNGGSKVIHVHKNCAEWAPNV. A PHD-type; degenerate zinc finger spans residues 632 to 681; the sequence is ISCSCCGLKGAALGCYNKSCKNSFHVTCAKLIPECRWDNVKFVMLCPLDA. 2 consecutive BRCT domains span residues 724 to 819 and 840 to 941; these read KQFH…PYEI and KKPK…LVLI.

In terms of assembly, forms heterodimer with BARD1/ROW1. In terms of tissue distribution, expressed ubiquitously with highest levels in flower buds. Mostly expressed in flowers and siliques, and, to a lower extent, in roots, rosette leaves, inflorescence and young cauline leaves.

It localises to the nucleus. Plays a role in DNA repair and in cell-cycle control. Required for the repair of DNA double-strand breaks (DSBs), both natural and induced by genotoxic stress, by homologous recombination (HR). The polypeptide is Protein BREAST CANCER SUSCEPTIBILITY 1 homolog (Arabidopsis thaliana (Mouse-ear cress)).